The sequence spans 175 residues: RNA pyrophosphohydrolase (175 aa).

The 144-residue stretch at 6–149 folds into the Nudix hydrolase domain; sequence GYRPNVGIVI…KRDVYRRVMK (144 aa). Residues 38–59 carry the Nudix box motif; sequence GGINPGETAEQAMYRELFEEVG.

This sequence belongs to the Nudix hydrolase family. RppH subfamily. Requires a divalent metal cation as cofactor.

In terms of biological role, accelerates the degradation of transcripts by removing pyrophosphate from the 5'-end of triphosphorylated RNA, leading to a more labile monophosphorylated state that can stimulate subsequent ribonuclease cleavage. This is RNA pyrophosphohydrolase from Serratia proteamaculans (strain 568).